Reading from the N-terminus, the 515-residue chain is Ribosome assembly protein 4 (515 aa).

The interval 20–128 is interaction with MDN1; sequence REVAIIPKDL…LLYTPRAVFK (109 aa). A ubiquitin-like (UBL) domain region spans residues 29-125; that stretch reads LPNVSIKFQA…QITLLYTPRA (97 aa). 8 WD repeats span residues 141–181, 184–223, 227–273, 276–314, 352–396, 400–439, 442–481, and 484–515; these read GHGS…PMHT, GHYN…CLGD, GHSK…CQYT, GHTN…RCIN, AQKK…KPIA, GHQK…FIST, GHVA…LSVD, and GHKD…LWTH.

The protein belongs to the NLE1/RSA4 family. As to quaternary structure, associates with the pre-60S ribosomal particle. Interacts (via WD repeats) with uL18 (RPL5). Interacts (via UBL domain) with MDN1 (via VWFA/MIDAS domain). Interacts (via WD repeats) with NSA2.

The protein resides in the nucleus. The protein localises to the nucleolus. In terms of biological role, involved in ribosome biogenesis. Required for processing and efficient intra-nuclear transport of pre-60S ribosomal subunits. Interacts with the AAA-ATPase Midasin (MDN1/REA1), which is essential for the ATP-dependent dissociation of a group of nonribosomal factors from the pre-60S particle. The protein is Ribosome assembly protein 4 of Saccharomyces cerevisiae (strain ATCC 204508 / S288c) (Baker's yeast).